A 173-amino-acid chain; its full sequence is Photosystem I assembly protein Ycf3 (173 aa).

3 TPR repeats span residues 35–68, 72–105, and 120–153; these read AYIY…EENP, GETL…NPKQ, and GRSA…YPGG.

The protein belongs to the Ycf3 family.

It is found in the cellular thylakoid membrane. In terms of biological role, essential for the assembly of the photosystem I (PSI) complex. May act as a chaperone-like factor to guide the assembly of the PSI subunits. This is Photosystem I assembly protein Ycf3 from Prochlorococcus marinus (strain MIT 9211).